The following is a 366-amino-acid chain: Mitochondrial division protein fszB (366 aa).

GTP-binding positions include 70-74, 157-159, glutamate 190, and aspartate 238; these read GGGGN and GTG.

Belongs to the FtsZ family.

The protein resides in the mitochondrion. Its function is as follows. Probably involved in mitochondrion division process. Binds to and hydrolyzes GTP. The chain is Mitochondrial division protein fszB (fszB) from Dictyostelium discoideum (Social amoeba).